A 120-amino-acid chain; its full sequence is Putative defensin-like protein 179 (120 aa).

The signal sequence occupies residues 1-27 (MERTSTSLLFLLSLLIIFASAVNQIRA). 7 disulfide bridges follow: C37/C56, C40/C63, C44/C65, C74/C120, C85/C105, C90/C114, and C94/C116.

Belongs to the DEFL family.

It is found in the secreted. The polypeptide is Putative defensin-like protein 179 (LCR57) (Arabidopsis thaliana (Mouse-ear cress)).